The chain runs to 1070 residues: DNA-directed RNA polymerase subunit beta (1070 aa).

Belongs to the RNA polymerase beta chain family. In plastids the minimal PEP RNA polymerase catalytic core is composed of four subunits: alpha, beta, beta', and beta''. When a (nuclear-encoded) sigma factor is associated with the core the holoenzyme is formed, which can initiate transcription.

Its subcellular location is the plastid. It localises to the chloroplast. It carries out the reaction RNA(n) + a ribonucleoside 5'-triphosphate = RNA(n+1) + diphosphate. In terms of biological role, DNA-dependent RNA polymerase catalyzes the transcription of DNA into RNA using the four ribonucleoside triphosphates as substrates. The chain is DNA-directed RNA polymerase subunit beta from Vitis vinifera (Grape).